The chain runs to 187 residues: UPF0340 protein stu1894 (187 aa).

It belongs to the UPF0340 family.

The sequence is that of UPF0340 protein stu1894 from Streptococcus thermophilus (strain ATCC BAA-250 / LMG 18311).